A 491-amino-acid chain; its full sequence is Nucleotidyltransferase MB21D2 (491 aa).

Positions 431–442 (RGSTTSIPSPQS) are enriched in polar residues. A disordered region spans residues 431–452 (RGSTTSIPSPQSDGGDPNQPDD). Thr435 is subject to Phosphothreonine. Residues Ser436, Ser439, and Ser442 each carry the phosphoserine modification.

Belongs to the mab-21 family.

In terms of biological role, probable nucleotidyltransferase that catalyzes the formation of cyclic dinucleotide second messenger in response to some unknown stimulus. This is Nucleotidyltransferase MB21D2 from Homo sapiens (Human).